The chain runs to 737 residues: MSTNPKPQRKTKRNTNRRPQDVKFPGGGQIVGGVYLLPRRGPRLGVRATRKTSERSQPRGRRQPIPKDRRSTGKSWGKPGYPWPLYGNEGCGWAGWLLSPRGSRPTWGPTDPRHRSRNLGKVIDTLTCGFADLMGYIPVVGAPVGGVARALAHGVRVLEDGINYATGNLPGCSFSIFLLALLSCVTVPVSAVEVRNISSSYYATNDCSNNSITWQLTNAVLHLPGCVPCENDNGTLRCWIQVTPNVAVKHRGALTHNLRTHVDMIVMAATVCSALYVGDICGAVMIASQAFIISPERHNFTQECNCSIYQGHITGHRMAWDMMLNWSPTLTMILAYAARVPELVLEVVFGGHWGVVFGLAYFSMQGAWAKVIAILLLVAGVDASTQVTGGQAAHTVRGVASIFSPGSRQDISLINTNGSWHINRTALNCNDSLQTGFFAALFYVRRFNSSGCPERLSSCRKLDDFRIGWGTLEYETNVTNEEDMRPYCWHYPPKPCGIVSAKTVCGPVYCFTPSPVVVGTTDRQGVPTYSWGENETDVFLLNSTRPPRGAWFGCTWMNGTGFTKTCGAPPCRIRRDYNGTLDLLCPTDCFRKHPDTTYLKCGAGPWLTPRCLVDYPYRLWHYPCTVNFTIFKVRMYVGGVEHRLDAACNFTRGDRCRLEDRDRSQQSPLLHSTTEWAVLPCSYSDLPALSTGLLHLHQNIVDVQYLYGLSPAITRHIVKWEWVILLFLLLADARVCA.

Residue Ser-2 is modified to N-acetylserine; by host. The interval 2-23 is interaction with STAT1; the sequence is STNPKPQRKTKRNTNRRPQDVK. Residues 2-58 form an interaction with EIF2AK2/PKR region; it reads STNPKPQRKTKRNTNRRPQDVKFPGGGQIVGGVYLLPRRGPRLGVRATRKTSERSQP. Residues 2-59 are interaction with DDX3X; that stretch reads STNPKPQRKTKRNTNRRPQDVKFPGGGQIVGGVYLLPRRGPRLGVRATRKTSERSQPR. The interval 2-75 is disordered; the sequence is STNPKPQRKT…PKDRRSTGKS (74 aa). At 2–168 the chain is on the cytoplasmic side; sequence STNPKPQRKT…EDGINYATGN (167 aa). 2 consecutive short sequence motifs (nuclear localization signal) follow at residues 5-13 and 38-43; these read PKPQRKTKR and PRRGPR. Residues 7–16 are compositionally biased toward basic residues; sequence PQRKTKRNTN. The span at 32 to 47 shows a compositional bias: low complexity; the sequence is GGVYLLPRRGPRLGVR. A Phosphoserine; by host modification is found at Ser-53. Short sequence motifs (nuclear localization signal) lie at residues 58–64 and 66–71; these read PRGRRQP and PKDRRS. Residues Ser-99 and Ser-116 each carry the phosphoserine; by host modification. The tract at residues 112–152 is important for endoplasmic reticulum and mitochondrial localization; it reads PRHRSRNLGKVIDTLTCGFADLMGYIPVVGAPVGGVARALA. An interaction with APOA2 region spans residues 122–173; the sequence is VIDTLTCGFADLMGYIPVVGAPVGGVARALAHGVRVLEDGINYATGNLPGCS. The segment at 164–167 is important for lipid droplets localization; the sequence is YATG. The helical transmembrane segment at 169-189 threads the bilayer; it reads LPGCSFSIFLLALLSCVTVPV. A propeptide spans 178–191 (ER anchor for the core protein, removed in mature form by host signal peptidase); sequence LLALLSCVTVPVSA. The Lumenal portion of the chain corresponds to 190–358; sequence SAVEVRNISS…FGGHWGVVFG (169 aa). Asn-196, Asn-209, and Asn-233 each carry an N-linked (GlcNAc...) asparagine; by host glycan. The interval 265-296 is important for fusion; it reads IVMAATVCSALYVGDICGAVMIASQAFIISPE. A glycan (N-linked (GlcNAc...) asparagine; by host) is linked at Asn-305. Residues 359–379 form a helical membrane-spanning segment; the sequence is LAYFSMQGAWAKVIAILLLVA. At 380 to 729 the chain is on the lumenal side; it reads GVDASTQVTG…WEWVILLFLL (350 aa). The tract at residues 385 to 411 is HVR1; the sequence is TQVTGGQAAHTVRGVASIFSPGSRQDI. N-linked (GlcNAc...) (high mannose) asparagine; by host glycans are attached at residues Asn-417, Asn-423, Asn-430, and Asn-448. Cystine bridges form between Cys-429-Cys-554, Cys-452-Cys-459, Cys-488-Cys-496, and Cys-505-Cys-510. The tract at residues 474–481 is HVR2; the sequence is YETNVTNE. A CD81-binding 1 region spans residues 482–495; it reads EDMRPYCWHYPPKP. Asn-542 carries an N-linked (GlcNAc...) asparagine; by host glycan. The segment at 546–553 is CD81-binding 2; the sequence is PPRGAWFG. An N-linked (GlcNAc...) (high mannose) asparagine; by host glycan is attached at Asn-558. 4 cysteine pairs are disulfide-bonded: Cys-566–Cys-571, Cys-585–Cys-589, Cys-601–Cys-624, and Cys-611–Cys-648. N-linked (GlcNAc...) (high mannose) asparagine; by host glycans are attached at residues Asn-627 and Asn-649. A disulfide bridge connects residues Cys-656 and Cys-681. Positions 664 to 675 are PKR/eIF2-alpha phosphorylation homology domain (PePHD); it reads SQQSPLLHSTTE. A helical transmembrane segment spans residues 730–737; sequence LADARVCA.

Belongs to the hepacivirus polyprotein family. In terms of assembly, homooligomer. Interacts with E1 (via C-terminus). Interacts with the non-structural protein 5A. Interacts (via N-terminus) with host STAT1 (via SH2 domain); this interaction results in decreased STAT1 phosphorylation and ubiquitin-mediated proteasome-dependent STAT1 degradation, leading to decreased IFN-stimulated gene transcription. Interacts with host STAT3; this interaction constitutively activates STAT3. Interacts with host LTBR receptor. Interacts with host TNFRSF1A receptor and possibly induces apoptosis. Interacts with host HNRPK. Interacts with host YWHAE. Interacts with host UBE3A/E6AP. Interacts with host DDX3X. Interacts with host APOA2. Interacts with host RXRA protein. Interacts with host SP110 isoform 3/Sp110b; this interaction sequesters the transcriptional corepressor SP110 away from the nucleus. Interacts with host CREB3 nuclear transcription protein; this interaction triggers cell transformation. Interacts with host ACY3. Interacts with host C1QR1. Interacts with host RBM24; this interaction, which enhances the interaction of the mature core protein with 5'-UTR, may inhibit viral translation and favor replication. Interacts with host EIF2AK2/PKR; this interaction induces the autophosphorylation of EIF2AK2. Part of the viral assembly initiation complex composed of NS2, E1, E2, NS3, NS4A, NS5A and the mature core protein. Forms a heterodimer with envelope glycoprotein E2. Interacts with mature core protein. Interacts with protease NS2. The heterodimer E1/E2 interacts with host CLDN1; this interaction plays a role in viral entry into host cell. Interacts with host SPSB2 (via C-terminus). Part of the viral assembly initiation complex composed of NS2, E1, E2, NS3, NS4A, NS5A and the mature core protein. As to quaternary structure, forms a heterodimer with envelope glycoprotein E1. Interacts with host CD81 and SCARB1 receptors; these interactions play a role in viral entry into host cell. Interacts with host EIF2AK2/PKR; this interaction inhibits EIF2AK2 and probably allows the virus to evade the innate immune response. Interacts with host CD209/DC-SIGN and CLEC4M/DC-SIGNR. Interact with host SPCS1; this interaction is essential for viral particle assembly. Interacts with protease NS2. The heterodimer E1/E2 interacts with host CLDN1; this interaction plays a role in viral entry into host cell. Part of the viral assembly initiation complex composed of NS2, E1, E2, NS3, NS4A, NS5A and the mature core protein. In terms of processing, specific enzymatic cleavages in vivo yield mature proteins. The structural proteins, core, E1, E2 and p7 are produced by proteolytic processing by host signal peptidases. The core protein precursor is synthesized as a 23 kDa, which is retained in the ER membrane through the hydrophobic signal peptide. Cleavage by the signal peptidase releases the 21 kDa mature core protein. The cleavage of the core protein precursor occurs between aminoacids 176 and 188 but the exact cleavage site is not known. Some degraded forms of the core protein appear as well during the course of infection. The other proteins (p7, NS2, NS3, NS4A, NS4B, NS5A and NS5B) are cleaved by the viral proteases. Autoprocessing between NS2 and NS3 is mediated by the NS2 cysteine protease catalytic domain and regulated by the NS3 N-terminal domain. Phosphorylated by host PKC and PKA. Post-translationally, ubiquitinated; mediated by UBE3A and leading to core protein subsequent proteasomal degradation. In terms of processing, highly N-glycosylated.

It is found in the host endoplasmic reticulum membrane. The protein resides in the host mitochondrion membrane. Its subcellular location is the virion. The protein localises to the host cytoplasm. It localises to the host nucleus. It is found in the host lipid droplet. The protein resides in the virion membrane. In terms of biological role, packages viral RNA to form a viral nucleocapsid, and promotes virion budding. Participates in the viral particle production as a result of its interaction with the non-structural protein 5A. Binds RNA and may function as a RNA chaperone to induce the RNA structural rearrangements taking place during virus replication. Modulates viral translation initiation by interacting with viral IRES and 40S ribosomal subunit. Affects various cell signaling pathways, host immunity and lipid metabolism. Prevents the establishment of cellular antiviral state by blocking the interferon-alpha/beta (IFN-alpha/beta) and IFN-gamma signaling pathways and by blocking the formation of phosphorylated STAT1 and promoting ubiquitin-mediated proteasome-dependent degradation of STAT1. Activates STAT3 leading to cellular transformation. Regulates the activity of cellular genes, including c-myc and c-fos. May repress the promoter of p53, and sequester CREB3 and SP110 isoform 3/Sp110b in the cytoplasm. Represses cell cycle negative regulating factor CDKN1A, thereby interrupting an important check point of normal cell cycle regulation. Targets transcription factors involved in the regulation of inflammatory responses and in the immune response: suppresses TNF-induced NF-kappa-B activation, and activates AP-1. Binds to dendritic cells (DCs) via C1QR1, resulting in down-regulation of T-lymphocytes proliferation. Alters lipid metabolism by interacting with hepatocellular proteins involved in lipid accumulation and storage. Induces up-regulation of FAS promoter activity, and thereby contributes to the increased triglyceride accumulation in hepatocytes (steatosis). Its function is as follows. Forms a heterodimer with envelope glycoprotein E2, which mediates virus attachment to the host cell, virion internalization through clathrin-dependent endocytosis and fusion with host membrane. Fusion with the host cell is most likely mediated by both E1 and E2, through conformational rearrangements of the heterodimer required for fusion rather than a classical class II fusion mechanism. E1/E2 heterodimer binds host apolipoproteins such as APOB and ApoE thereby forming a lipo-viro-particle (LVP). APOE associated to the LVP allows the initial virus attachment to cell surface receptors such as the heparan sulfate proteoglycans (HSPGs), syndecan-1 (SDC1), syndecan-1 (SDC2), the low-density lipoprotein receptor (LDLR) and scavenger receptor class B type I (SCARB1). The cholesterol transfer activity of SCARB1 allows E2 exposure and binding of E2 to SCARB1 and the tetraspanin CD81. E1/E2 heterodimer binding on CD81 activates the epithelial growth factor receptor (EGFR) signaling pathway. Diffusion of the complex E1-E2-EGFR-SCARB1-CD81 to the cell lateral membrane allows further interaction with Claudin 1 (CLDN1) and occludin (OCLN) to finally trigger HCV entry. Forms a heterodimer with envelope glycoprotein E1, which mediates virus attachment to the host cell, virion internalization through clathrin-dependent endocytosis and fusion with host membrane. Fusion with the host cell is most likely mediated by both E1 and E2, through conformational rearrangements of the heterodimer required for fusion rather than a classical class II fusion mechanism. The interaction between envelope glycoprotein E2 and host apolipoprotein E/APOE allows the proper assembly, maturation and infectivity of the viral particles. This interaction is probably promoted via the up-regulation of cellular autophagy by the virus. E1/E2 heterodimer binds host apolipoproteins such as APOB and APOE thereby forming a lipo-viro-particle (LVP). APOE associated to the LVP allows the initial virus attachment to cell surface receptors such as the heparan sulfate proteoglycans (HSPGs), syndecan-1 (SDC1), syndecan-1 (SDC2), the low-density lipoprotein receptor (LDLR) and scavenger receptor class B type I (SCARB1). The cholesterol transfer activity of SCARB1 allows E2 exposure and binding of E2 to SCARB1 and the tetraspanin CD81. E1/E2 heterodimer binding on CD81 activates the epithelial growth factor receptor (EGFR) signaling pathway. Diffusion of the complex E1-E2-EGFR-SCARB1-CD81 to the cell lateral membrane allows further interaction with Claudin 1 (CLDN1) and occludin (OCLN) to finally trigger HCV entry. Inhibits host EIF2AK2/PKR activation, preventing the establishment of an antiviral state. Viral ligand for CD209/DC-SIGN and CLEC4M/DC-SIGNR, which are respectively found on dendritic cells (DCs), and on liver sinusoidal endothelial cells and macrophage-like cells of lymph node sinuses. These interactions allow the capture of circulating HCV particles by these cells and subsequent facilitated transmission to permissive cells such as hepatocytes and lymphocyte subpopulations. This is Genome polyprotein from Hepatitis C virus (isolate HC-J7) (HCV).